Consider the following 688-residue polypeptide: MNENKGNFANKKMIKRAVKDSFIKLSPKTQMENPVMFLVYISSILTTVLYAVSLVGIRDSKSSFILGITIILWITVLFANFAEAIAEGRGKAQADSLRAAKKDVEAHKIISLEKKDEITKVSSALLKKGDIVIVVAGEQVPADGEVIDGAASVDESAITGESAPVIRESGGDRSAVTGGTTVISDRLIIQVTSEAGESFLDKMISMVEGAARKKTPNEIALQILLISLTIIFLLVTVSLYSYSIFSANQAGVVNPISVTSLVALLVCLAPTTIGALLSSIGIAGMSRLNQANVLAMSGRAIEAAGDVDILMLDKTGTITLGNREACEFIPVNRVDENELADAAQLSSLADETPEGRSIVVLAKEKFGIRGRNIRESNMEFIPFTAKTRMSGVNYNNSEIRKGAAETVKDYVISRGGYYSKECDEIVARISNKGGTPLVVAKDNKVLGVVYLKDIIKQGVQEKFADLRKMGIKTIMITGDNPLTAAAIAAEAGVDDFLAEATPEGKLEMIRDFQVKGHLVAMTGDGTNDAPALAQADVAVAMNTGTQAAKEAGNMVDLDSSPTKLIDIVRIGKQLLMTRGSLTTFSIANDLAKYFAIIPALFIGLYPGLSALNIMNLHSAESAIFSAIIYNALIIVALIPLALKGVKYREVSAGKLLSRNLLVYGLGGIIVPFIAIKVIDVLITAIGIV.

4 helical membrane passes run 37-57 (FLVY…LVGI), 65-85 (ILGI…AEAI), 219-239 (IALQ…TVSL), and 262-282 (VALL…SIGI). Aspartate 313 acts as the 4-aspartylphosphate intermediate in catalysis. ATP-binding positions include aspartate 350, glutamate 354, 383 to 390 (FTAKTRMS), and lysine 401. 2 residues coordinate Mg(2+): aspartate 524 and aspartate 528. 3 consecutive transmembrane segments (helical) span residues 594–614 (FAII…LNIM), 622–642 (AIFS…PLAL), and 668–688 (IIVP…IGIV).

Belongs to the cation transport ATPase (P-type) (TC 3.A.3) family. Type IA subfamily. In terms of assembly, the system is composed of three essential subunits: KdpA, KdpB and KdpC.

It localises to the cell membrane. It carries out the reaction K(+)(out) + ATP + H2O = K(+)(in) + ADP + phosphate + H(+). Functionally, part of the high-affinity ATP-driven potassium transport (or Kdp) system, which catalyzes the hydrolysis of ATP coupled with the electrogenic transport of potassium into the cytoplasm. This subunit is responsible for energy coupling to the transport system and for the release of the potassium ions to the cytoplasm. This Clostridium botulinum (strain Eklund 17B / Type B) protein is Potassium-transporting ATPase ATP-binding subunit.